Here is a 339-residue protein sequence, read N- to C-terminus: Glucokinase (339 aa).

16-21 (GDIGGT) contacts ATP.

It belongs to the bacterial glucokinase family.

It localises to the cytoplasm. It catalyses the reaction D-glucose + ATP = D-glucose 6-phosphate + ADP + H(+). The polypeptide is Glucokinase (Pseudomonas paraeruginosa (strain DSM 24068 / PA7) (Pseudomonas aeruginosa (strain PA7))).